We begin with the raw amino-acid sequence, 126 residues long: Iron-sulfur cluster insertion protein ErpA (126 aa).

Residues Met-1–Leu-21 are disordered. The iron-sulfur cluster site is built by Cys-54, Cys-118, and Cys-120.

It belongs to the HesB/IscA family. Homodimer. Requires iron-sulfur cluster as cofactor.

Functionally, required for insertion of 4Fe-4S clusters for at least IspG. This chain is Iron-sulfur cluster insertion protein ErpA, found in Psychrobacter arcticus (strain DSM 17307 / VKM B-2377 / 273-4).